A 211-amino-acid chain; its full sequence is Orotate phosphoribosyltransferase (211 aa).

5-phospho-alpha-D-ribose 1-diphosphate is bound by residues arginine 103, lysine 107, histidine 109, and 129–137 (EDLISTGKS). Serine 133 provides a ligand contact to orotate.

Belongs to the purine/pyrimidine phosphoribosyltransferase family. PyrE subfamily. In terms of assembly, homodimer. The cofactor is Mg(2+).

The catalysed reaction is orotidine 5'-phosphate + diphosphate = orotate + 5-phospho-alpha-D-ribose 1-diphosphate. It functions in the pathway pyrimidine metabolism; UMP biosynthesis via de novo pathway; UMP from orotate: step 1/2. Functionally, catalyzes the transfer of a ribosyl phosphate group from 5-phosphoribose 1-diphosphate to orotate, leading to the formation of orotidine monophosphate (OMP). This Fusobacterium nucleatum subsp. nucleatum (strain ATCC 25586 / DSM 15643 / BCRC 10681 / CIP 101130 / JCM 8532 / KCTC 2640 / LMG 13131 / VPI 4355) protein is Orotate phosphoribosyltransferase.